The following is a 290-amino-acid chain: Small ribosomal subunit protein bS6 (290 aa).

Positions valine 208 to glycine 233 are disordered.

It belongs to the bacterial ribosomal protein bS6 family.

Functionally, binds together with bS18 to 16S ribosomal RNA. This chain is Small ribosomal subunit protein bS6, found in Mesoplasma florum (strain ATCC 33453 / NBRC 100688 / NCTC 11704 / L1) (Acholeplasma florum).